The sequence spans 359 residues: NADH-quinone oxidoreductase subunit H (359 aa).

A run of 8 helical transmembrane segments spans residues 16 to 36 (IWPATVWPVLWVLIKIVAVLA), 94 to 114 (GLFILGPIMTIMPALAAWAVI), 128 to 148 (GLLFIMAITSLEVYGVIIAGW), 167 to 187 (VSYEIAMGFCLVVVLMVSGSL), 205 to 225 (GLTFLSWNWLPLLPIFVVYFI), 261 to 281 (FFLAEYANMILVSVLCVLLFL), 296 to 316 (IPGWIWLGLKTFVVVTIFLWV), and 331 to 351 (LGWKIFIPVTLVWLVVVGAWM).

The protein belongs to the complex I subunit 1 family. As to quaternary structure, NDH-1 is composed of 14 different subunits. Subunits NuoA, H, J, K, L, M, N constitute the membrane sector of the complex.

It localises to the cell inner membrane. It carries out the reaction a quinone + NADH + 5 H(+)(in) = a quinol + NAD(+) + 4 H(+)(out). Functionally, NDH-1 shuttles electrons from NADH, via FMN and iron-sulfur (Fe-S) centers, to quinones in the respiratory chain. The immediate electron acceptor for the enzyme in this species is believed to be ubiquinone. Couples the redox reaction to proton translocation (for every two electrons transferred, four hydrogen ions are translocated across the cytoplasmic membrane), and thus conserves the redox energy in a proton gradient. This subunit may bind ubiquinone. The chain is NADH-quinone oxidoreductase subunit H from Polaromonas naphthalenivorans (strain CJ2).